A 228-amino-acid polypeptide reads, in one-letter code: MTVETQLNPTPPVNQQIYRILRRDIVHCLIAPGTPLSEKEVSVRFNVSRQPVREAFIKLAENGLIQIRPQRGSYVNKISMAQVRNGSFIRQAIECAVARRAASMITESQCYQLEQNLHQQRIAIERKQLDDFFELDDNFHQLLTQIADCQLAWDTIENLKATVDRVRYMSFDHVSPPEMLLRQHLDIFSALQKRDGDAVERAMTQHLQEISESVRQIRQENSDWFSEE.

An HTH gntR-type domain is found at 11–78; it reads PPVNQQIYRI…PQRGSYVNKI (68 aa). Positions 38–57 form a DNA-binding region, H-T-H motif; the sequence is EKEVSVRFNVSRQPVREAFI.

This is an uncharacterized protein from Escherichia coli O6:H1 (strain CFT073 / ATCC 700928 / UPEC).